Consider the following 508-residue polypeptide: Histidine ammonia-lyase (508 aa).

The segment at residues 145 to 147 (ASG) is a cross-link (5-imidazolinone (Ala-Gly)). The residue at position 146 (S146) is a 2,3-didehydroalanine (Ser).

This sequence belongs to the PAL/histidase family. In terms of processing, contains an active site 4-methylidene-imidazol-5-one (MIO), which is formed autocatalytically by cyclization and dehydration of residues Ala-Ser-Gly.

Its subcellular location is the cytoplasm. It carries out the reaction L-histidine = trans-urocanate + NH4(+). It participates in amino-acid degradation; L-histidine degradation into L-glutamate; N-formimidoyl-L-glutamate from L-histidine: step 1/3. The protein is Histidine ammonia-lyase of Myxococcus xanthus (strain DK1622).